Here is a 159-residue protein sequence, read N- to C-terminus: Cytochrome P450 monooxygenase aunB (159 aa).

Cys-134 serves as a coordination point for heme.

This sequence belongs to the cytochrome P450 family. Heme serves as cofactor.

The enzyme catalyses 2 fonsecin B + NADPH + O2 + H(+) = aurasperone B + NADP(+) + 2 H2O. The catalysed reaction is 2 rubrofusarin B + NADPH + O2 + H(+) = aurasperone A + NADP(+) + 2 H2O. The protein operates within secondary metabolite biosynthesis. Functionally, cytochrome P450 monooxygenase; part of the gene cluster that mediates the biosynthesis of aurasperone B, a dimeric gamma-naphthopyrone. The first step in the biosynthesis of aurasperone B is the production of gamma-naphthopyrone precursor YWA1 by the non-reducing polyketide synthase albA, via condensation of one acetyl-CoA starter unit with 6 malonyl-CoA units. YWA1 is then methylated by aunE at position C-6 to yield foncesin which is further methylated at position C-8 by aunD to produce fonsecin B. A key enzyme in the biosynthetic pathway is the cytochrome P450 monooxygenase aunB which catalyzes the oxidative dimerization of fonsecin B to aurasperone B. AunB also catalyzes the oxidative dimerization of rubrofusarin B into aurasperone A. In Aspergillus niger (strain ATCC 1015 / CBS 113.46 / FGSC A1144 / LSHB Ac4 / NCTC 3858a / NRRL 328 / USDA 3528.7), this protein is Cytochrome P450 monooxygenase aunB.